The primary structure comprises 367 residues: Anthranilate phosphoribosyltransferase (367 aa).

Over residues 1-21 (MALSSESSAASAARRPSGGPA) the composition is skewed to low complexity. The segment at 1-24 (MALSSESSAASAARRPSGGPATSW) is disordered. 5-phospho-alpha-D-ribose 1-diphosphate contacts are provided by residues glycine 104, 107–108 (GD), threonine 112, 114–117 (NLST), 132–140 (KHGNRAASS), and glycine 144. Glycine 104 lines the anthranilate pocket. Serine 116 contributes to the Mg(2+) binding site. Asparagine 135 contributes to the anthranilate binding site. Arginine 190 serves as a coordination point for anthranilate. Residues aspartate 248 and glutamate 249 each contribute to the Mg(2+) site.

The protein belongs to the anthranilate phosphoribosyltransferase family. As to quaternary structure, homodimer. The cofactor is Mg(2+).

It carries out the reaction N-(5-phospho-beta-D-ribosyl)anthranilate + diphosphate = 5-phospho-alpha-D-ribose 1-diphosphate + anthranilate. Its pathway is amino-acid biosynthesis; L-tryptophan biosynthesis; L-tryptophan from chorismate: step 2/5. In terms of biological role, catalyzes the transfer of the phosphoribosyl group of 5-phosphorylribose-1-pyrophosphate (PRPP) to anthranilate to yield N-(5'-phosphoribosyl)-anthranilate (PRA). This chain is Anthranilate phosphoribosyltransferase, found in Mycolicibacterium paratuberculosis (strain ATCC BAA-968 / K-10) (Mycobacterium paratuberculosis).